We begin with the raw amino-acid sequence, 498 residues long: Succinate-semialdehyde dehydrogenase [NADP(+)] 1 (498 aa).

247-252 (GSTNVG) contacts NAD(+). Residues E269 and C303 contribute to the active site.

Belongs to the aldehyde dehydrogenase family. In terms of assembly, homotetramer.

It localises to the cytoplasm. The catalysed reaction is succinate semialdehyde + NAD(+) + H2O = succinate + NADH + 2 H(+). It catalyses the reaction succinate semialdehyde + NADP(+) + H2O = succinate + NADPH + 2 H(+). It functions in the pathway amino-acid degradation; 4-aminobutanoate degradation. Its function is as follows. Catalyzes the oxidation of succinate semialdehyde to succinate. Can utilize both NAD(+) or NADP(+) as a coenzyme. Functions in a gamma-aminobutyrate (GABA) degradation pathway that allows growth utilizing GABA as a nitrogen source. Functions in the GABA shunt, which allows to bypass 2 reactions in the TCA cycle by removing alpha-ketoglutarate from the cycle and feeding succinate and NADH back into the cycle. This is Succinate-semialdehyde dehydrogenase [NADP(+)] 1 (ssd1) from Schizosaccharomyces pombe (strain 972 / ATCC 24843) (Fission yeast).